The chain runs to 671 residues: Fusexin 1 (671 aa).

Residues 1-12 (MRAVSDFLKNKW) are Cytoplasmic-facing. A helical transmembrane segment spans residues 13 to 33 (VAVPAVALLILSLGFLAQNYI). Residues 34 to 574 (TGSFVSGDQI…DPFCADGPLE (541 aa)) are Extracellular-facing. 4 cysteine pairs are disulfide-bonded: Cys-145–Cys-180, Cys-409–Cys-452, Cys-480–Cys-500, and Cys-513–Cys-528. The tract at residues 168–173 (GAIADY) is fusion loop. A helical membrane pass occupies residues 575 to 595 (MLSKMFHLVAGTAVAFFTGSL). At 596-628 (GYRAGRWVDGEYQIKGGFDPLKSRSVSRAKRGR) the chain is on the cytoplasmic side. Residues 629–649 (FLIGLIAELVSFLLGFYVILL) form a helical membrane-spanning segment. Val-650 is a topological domain (extracellular). A helical membrane pass occupies residues 651–671 (PIWAQLMVILGYVLFKYYTPF).

The protein belongs to the HAP2/GCS1 family. Fusexin 1 subfamily. As to quaternary structure, homotrimer stabilized by interdomain contacts and numerous Ca(2+) and Na(+) ions.

The protein localises to the cell surface. It is found in the cell membrane. Its function is as follows. Exhibits fusogenic activity. Mediates cell-cell fusion in mammalian cells (bilateral fusion). This Natrinema altunense (strain JCM 12890 / CGMCC 1.3731 / AJ2) protein is Fusexin 1.